A 127-amino-acid polypeptide reads, in one-letter code: Large ribosomal subunit protein bL19 (127 aa).

It belongs to the bacterial ribosomal protein bL19 family.

Its function is as follows. This protein is located at the 30S-50S ribosomal subunit interface and may play a role in the structure and function of the aminoacyl-tRNA binding site. The sequence is that of Large ribosomal subunit protein bL19 from Roseobacter denitrificans (strain ATCC 33942 / OCh 114) (Erythrobacter sp. (strain OCh 114)).